The primary structure comprises 178 residues: ATP synthase subunit delta (178 aa).

This sequence belongs to the ATPase delta chain family. F-type ATPases have 2 components, F(1) - the catalytic core - and F(0) - the membrane proton channel. F(1) has five subunits: alpha(3), beta(3), gamma(1), delta(1), epsilon(1). F(0) has three main subunits: a(1), b(2) and c(10-14). The alpha and beta chains form an alternating ring which encloses part of the gamma chain. F(1) is attached to F(0) by a central stalk formed by the gamma and epsilon chains, while a peripheral stalk is formed by the delta and b chains.

Its subcellular location is the cell membrane. Functionally, f(1)F(0) ATP synthase produces ATP from ADP in the presence of a proton or sodium gradient. F-type ATPases consist of two structural domains, F(1) containing the extramembraneous catalytic core and F(0) containing the membrane proton channel, linked together by a central stalk and a peripheral stalk. During catalysis, ATP synthesis in the catalytic domain of F(1) is coupled via a rotary mechanism of the central stalk subunits to proton translocation. This protein is part of the stalk that links CF(0) to CF(1). It either transmits conformational changes from CF(0) to CF(1) or is implicated in proton conduction. This Streptococcus pyogenes serotype M1 protein is ATP synthase subunit delta.